A 179-amino-acid chain; its full sequence is Ribosome maturation factor RimM (179 aa).

Residues Asp-102 to Phe-179 enclose the PRC barrel domain.

The protein belongs to the RimM family. In terms of assembly, binds ribosomal protein uS19.

It is found in the cytoplasm. An accessory protein needed during the final step in the assembly of 30S ribosomal subunit, possibly for assembly of the head region. Essential for efficient processing of 16S rRNA. May be needed both before and after RbfA during the maturation of 16S rRNA. It has affinity for free ribosomal 30S subunits but not for 70S ribosomes. The sequence is that of Ribosome maturation factor RimM from Pseudomonas syringae pv. syringae (strain B728a).